The chain runs to 127 residues: Holo-[acyl-carrier-protein] synthase (127 aa).

Mg(2+)-binding residues include Asp8 and Glu57.

It belongs to the P-Pant transferase superfamily. AcpS family. It depends on Mg(2+) as a cofactor.

The protein localises to the cytoplasm. It carries out the reaction apo-[ACP] + CoA = holo-[ACP] + adenosine 3',5'-bisphosphate + H(+). Functionally, transfers the 4'-phosphopantetheine moiety from coenzyme A to a Ser of acyl-carrier-protein. In Vesicomyosocius okutanii subsp. Calyptogena okutanii (strain HA), this protein is Holo-[acyl-carrier-protein] synthase.